The chain runs to 469 residues: Ufm1-specific protease 2 (469 aa).

Methionine 1 is modified (N-acetylmethionine). Catalysis depends on residues cysteine 302, aspartate 426, and histidine 428.

It belongs to the peptidase C78 family. In terms of tissue distribution, expressed in brain.

The protein resides in the endoplasmic reticulum. It is found in the cytoplasm. It localises to the nucleus. Functionally, thiol-dependent isopeptidase that specifically cleaves UFM1, a ubiquitin-like modifier protein, from conjugated proteins, such as CD274/PD-L1, CYB5R3, DDRGK1, MRE11, RPL26/uL24, TRIP4 and RPL26/uL24. While it is also able to mediate the processing of UFM1 precursors, a prerequisite for conjugation reactions, UFSP2 mainly acts as a protein deUFMylase that mediates deconjugation of UFM1 from target proteins. Mediates deUFMylation of RPL26/uL24, a critical step to release the UFM1 ribosome E3 ligase (UREL) complex during the recycling of 60S ribosome subunits from the endoplasmic reticulum. Catalyzes deUFMylation of TRIP4, regulating intracellular nuclear receptors transactivation and thereby regulate cell proliferation and differentiation. In Homo sapiens (Human), this protein is Ufm1-specific protease 2.